The chain runs to 308 residues: Acetyl-coenzyme A carboxylase carboxyl transferase subunit beta (308 aa).

A CoA carboxyltransferase N-terminal domain is found at 25–294 (VWTKCTSCEQ…PLVVSVNDAP (270 aa)). Residues Cys-29, Cys-32, Cys-48, and Cys-51 each coordinate Zn(2+). Residues 29 to 51 (CTSCEQVLYYAELERNLEVCPKC) form a C4-type zinc finger.

This sequence belongs to the AccD/PCCB family. As to quaternary structure, acetyl-CoA carboxylase is a heterohexamer composed of biotin carboxyl carrier protein (AccB), biotin carboxylase (AccC) and two subunits each of ACCase subunit alpha (AccA) and ACCase subunit beta (AccD). Zn(2+) serves as cofactor.

It localises to the cytoplasm. It carries out the reaction N(6)-carboxybiotinyl-L-lysyl-[protein] + acetyl-CoA = N(6)-biotinyl-L-lysyl-[protein] + malonyl-CoA. It participates in lipid metabolism; malonyl-CoA biosynthesis; malonyl-CoA from acetyl-CoA: step 1/1. In terms of biological role, component of the acetyl coenzyme A carboxylase (ACC) complex. Biotin carboxylase (BC) catalyzes the carboxylation of biotin on its carrier protein (BCCP) and then the CO(2) group is transferred by the transcarboxylase to acetyl-CoA to form malonyl-CoA. The sequence is that of Acetyl-coenzyme A carboxylase carboxyl transferase subunit beta from Vibrio cholerae serotype O1 (strain ATCC 39315 / El Tor Inaba N16961).